We begin with the raw amino-acid sequence, 306 residues long: Ribosomal protein L11 methyltransferase (306 aa).

S-adenosyl-L-methionine contacts are provided by T154, G179, D201, and N242.

It belongs to the methyltransferase superfamily. PrmA family.

The protein localises to the cytoplasm. It catalyses the reaction L-lysyl-[protein] + 3 S-adenosyl-L-methionine = N(6),N(6),N(6)-trimethyl-L-lysyl-[protein] + 3 S-adenosyl-L-homocysteine + 3 H(+). Its function is as follows. Methylates ribosomal protein L11. In Xanthomonas euvesicatoria pv. vesicatoria (strain 85-10) (Xanthomonas campestris pv. vesicatoria), this protein is Ribosomal protein L11 methyltransferase.